We begin with the raw amino-acid sequence, 80 residues long: Raniseptin-6 (80 aa).

Residues 1–22 (MAFLKKSLFLVLFLGIVSLSIC) form the signal peptide. Residues 23-49 (EEEKREGEEEEKQEEENEELSEEELRE) constitute a propeptide that is removed on maturation.

Belongs to the frog skin active peptide (FSAP) family. Dermaseptin subfamily. Expressed by the skin glands.

It is found in the secreted. Has antibacterial activity. The chain is Raniseptin-6 from Boana raniceps (Chaco tree frog).